A 329-amino-acid polypeptide reads, in one-letter code: DNA-directed RNA polymerase subunit alpha (329 aa).

The segment at 1-231 (MSILSFQMPE…KHFMLFSDQT (231 aa)) is alpha N-terminal domain (alpha-NTD). The alpha C-terminal domain (alpha-CTD) stretch occupies residues 247–329 (EEFLHMRKLL…DTAKYKLDED (83 aa)).

This sequence belongs to the RNA polymerase alpha chain family. Homodimer. The RNAP catalytic core consists of 2 alpha, 1 beta, 1 beta' and 1 omega subunit. When a sigma factor is associated with the core the holoenzyme is formed, which can initiate transcription.

It carries out the reaction RNA(n) + a ribonucleoside 5'-triphosphate = RNA(n+1) + diphosphate. Its function is as follows. DNA-dependent RNA polymerase catalyzes the transcription of DNA into RNA using the four ribonucleoside triphosphates as substrates. The sequence is that of DNA-directed RNA polymerase subunit alpha from Cytophaga hutchinsonii (strain ATCC 33406 / DSM 1761 / CIP 103989 / NBRC 15051 / NCIMB 9469 / D465).